The primary structure comprises 576 residues: Putative SPbeta prophage-derived single-strand DNA-specific exonuclease YorK (576 aa).

Tyr473 carries the phosphotyrosine modification.

The protein belongs to the RecJ family.

Putative single-stranded-DNA-specific exonuclease. This is Putative SPbeta prophage-derived single-strand DNA-specific exonuclease YorK (yorK) from Bacillus subtilis (strain 168).